Consider the following 434-residue polypeptide: Beta-phenylalanine transaminase (434 aa).

R41 is a (S)-3-amino-3-phenylpropanoate binding site. 132–133 (GT) is a pyridoxal 5'-phosphate binding site. K267 carries the post-translational modification N6-(pyridoxal phosphate)lysine. T300 contributes to the pyridoxal 5'-phosphate binding site.

The protein belongs to the class-III pyridoxal-phosphate-dependent aminotransferase family. Homodimer. Pyridoxal 5'-phosphate serves as cofactor.

It catalyses the reaction (S)-3-amino-3-phenylpropanoate + 2-oxoglutarate = 3-oxo-3-phenylpropanoate + L-glutamate. The catalysed reaction is (S)-3-amino-3-phenylpropanoate + pyruvate = 3-oxo-3-phenylpropanoate + L-alanine. With respect to regulation, is inhibited by 2-aminooxyacetate (AOA), a mimic of beta-alanine and a known inhibitor of aminotransferases. Functionally, aminotransferase that acts exclusively on beta-amino acids and exhibits a broad substrate range in vitro, accepting meta-, para- and, to a lesser extent, ortho-substituted beta-phenylalanine derivatives as amino donors, and 2-oxoglutarate or pyruvate as amino acceptors. Is highly enantioselective toward (S)-beta-phenylalanine (is not active with (R)-beta-phenylalanine) and derivatives with different substituents on the phenyl ring, allowing the kinetic resolution of various racemic beta-amino acids to yield (R)-beta-amino acids with &gt;95% enantiomeric excess (ee). Highly prefers aromatic beta-amino acids over aliphatic beta-amino acids; cannot use beta-alanine or beta-glutamate as substrate. Is likely involved in the beta-phenylalanine degradation pathway that allows V.paradoxus strain CBF3 to use beta-phenylalanine as a sole nitrogen source. This is Beta-phenylalanine transaminase from Variovorax paradoxus.